Here is a 269-residue protein sequence, read N- to C-terminus: Protein UL24 (269 aa).

Positions 191 to 244 are disordered; it reads IEPRTQRARRRRGGAARGSASRPKRSHSGARDPPESAARQLPPADQTPTSTEGG.

The protein belongs to the herpesviridae UL24 family.

It localises to the virion. Its subcellular location is the host cytoplasm. The protein resides in the host nucleus. It is found in the host nucleolus. The protein localises to the host Golgi apparatus. May participate in nuclear egress of viral particles. Plays a role in the dispersal of several host nucleolar proteins including NCL/nucleolin and NPM1. Since deletion of host NCL/nucleolin negatively impact on nuclear egress, UL24 supposedly acts on this process through its effect on host nucleoli. This is Protein UL24 from Homo sapiens (Human).